Consider the following 257-residue polypeptide: Zinc transporter ZupT (257 aa).

The next 8 helical transmembrane spans lie at 5–25, 33–53, 61–81, 109–129, 137–157, 171–191, 195–215, and 236–256; these read LILT…GVLG, LAFS…MEML, GMSP…YFGL, AILL…ATFV, LGFG…LAVA, IFWA…AWLI, LVSP…MVAL, and GVLC…TIGI. The Fe(2+) site is built by Asn-120 and Glu-123. 2 residues coordinate Zn(2+): Glu-123 and His-148. The Fe(2+) site is built by Asn-149, Glu-152, and Glu-181. Glu-152 is a binding site for Zn(2+).

It belongs to the ZIP transporter (TC 2.A.5) family. ZupT subfamily.

It localises to the cell inner membrane. The catalysed reaction is Zn(2+)(in) = Zn(2+)(out). Functionally, mediates zinc uptake. May also transport other divalent cations. This Salmonella paratyphi A (strain ATCC 9150 / SARB42) protein is Zinc transporter ZupT.